A 506-amino-acid chain; its full sequence is Conglutin alpha 1 (506 aa).

The signal sequence occupies residues 1–19 (MANKLLALSLFLLFSGCFA). Cystine bridges form between Cys-31–Cys-64 and Cys-107–Cys-328. A Cupin type-1 1 domain is found at 36–235 (LNALEPDNSV…AFSVDREIVR (200 aa)). Disordered stretches follow at residues 111–131 (YEEP…RHQK), 195–216 (QQKE…NVLS), and 251–322 (VKEG…DRNG). A compositionally biased stretch (low complexity) spans 195–207 (QQKEGGQGQQQEG). Over residues 270–280 (EEEEEEEEEEE) the composition is skewed to acidic residues. The span at 306–315 (QVRRVRRPHH) shows a compositional bias: basic residues. A Cupin type-1 2 domain is found at 334-483 (HNIGQSTSPD…AFNLDRDQAR (150 aa)). N-linked (GlcNAc...) asparagine glycans are attached at residues Asn-397 and Asn-439.

This sequence belongs to the 11S seed storage protein (globulins) family. As to quaternary structure, hexamer; each subunit is composed of an acidic and a basic chain derived from a single precursor and linked by a disulfide bond. Component of globulins complexes which accumulate in seeds. In terms of tissue distribution, expressed in developing cotyledons and in the embryonic axis of germinating seeds.

Its function is as follows. Sulfur-rich seed storage protein. This protein found in the seeds of many leguminous and non-leguminous plants is the source of sulfur-containing amino acids in seed meals. In Lupinus angustifolius (Narrow-leaved blue lupine), this protein is Conglutin alpha 1.